The following is a 581-amino-acid chain: Eukaryotic translation initiation factor 2A (581 aa).

Position 1 is an N-acetylmethionine (Met-1). At Ala-2 the chain carries N-acetylalanine; in Eukaryotic translation initiation factor 2A, N-terminally processed. Thr-5 carries the phosphothreonine modification. 3 WD repeats span residues 23-63, 125-163, and 356-401; these read PHFT…NIIN, QKKM…TIAN, and VASD…HKYD. A disordered region spans residues 432 to 533; that stretch reads PSEVPSEEPK…SGDPEVDKKI (102 aa). Basic and acidic residues predominate over residues 494 to 503; it reads KKAAKQEARS. A phosphoserine mark is found at Ser-503, Ser-513, and Ser-522. Over residues 514–524 the composition is skewed to polar residues; the sequence is APRNTVTQSAS. A coiled-coil region spans residues 527–578; sequence PEVDKKIKNLKKKLKAIEQLKEQAAAGKQLEKNQLEKIQKETALLQELEDLE.

This sequence belongs to the WD repeat EIF2A family.

Functions in the early steps of protein synthesis of a small number of specific mRNAs. Acts by directing the binding of methionyl-tRNAi to 40S ribosomal subunits. In contrast to the eIF-2 complex, it binds methionyl-tRNAi to 40S subunits in a codon-dependent manner, whereas the eIF-2 complex binds methionyl-tRNAi to 40S subunits in a GTP-dependent manner. This is Eukaryotic translation initiation factor 2A (Eif2a) from Mus musculus (Mouse).